We begin with the raw amino-acid sequence, 172 residues long: uncharacterized protein (172 aa).

The N-terminal stretch at 1-21 (MMKFKKCLLPVAMLASFTLAG) is a signal peptide. Cys-22 carries N-palmitoyl cysteine lipidation. Cys-22 carries S-diacylglycerol cysteine lipidation.

Its subcellular location is the cell membrane. This is an uncharacterized protein from Escherichia coli O157:H7.